Here is a 38-residue protein sequence, read N- to C-terminus: Large ribosomal subunit protein bL36 (38 aa).

The protein belongs to the bacterial ribosomal protein bL36 family.

This Lacticaseibacillus casei (strain BL23) (Lactobacillus casei) protein is Large ribosomal subunit protein bL36.